The sequence spans 234 residues: tRNA (guanine-N(1)-)-methyltransferase (234 aa).

S-adenosyl-L-methionine contacts are provided by residues Gly115 and 135–140 (VGDYIL).

The protein belongs to the RNA methyltransferase TrmD family. Homodimer.

It is found in the cytoplasm. It carries out the reaction guanosine(37) in tRNA + S-adenosyl-L-methionine = N(1)-methylguanosine(37) in tRNA + S-adenosyl-L-homocysteine + H(+). Specifically methylates guanosine-37 in various tRNAs. This chain is tRNA (guanine-N(1)-)-methyltransferase, found in Rickettsia peacockii (strain Rustic).